The chain runs to 729 residues: Fibroblast growth factor receptor homolog 1 (729 aa).

The first 36 residues, 1 to 36 (MAAAWSWRASHSTITMTSGSLVVLFLLLSIWQPAVQ), serve as a signal peptide directing secretion. The Extracellular segment spans residues 37–309 (VEGRRQMANS…VASGSLHSTS (273 aa)). Positions 56–101 (ARSQNKTPAITNNANQSSTSSADLDDGAADDDDNKADLPVNVSSKP) are disordered. A compositionally biased stretch (low complexity) spans 66 to 77 (TNNANQSSTSSA). N-linked (GlcNAc...) asparagine glycosylation occurs at Asn-70. The segment covering 78–89 (DLDDGAADDDDN) has biased composition (acidic residues). N-linked (GlcNAc...) asparagine glycosylation is found at Asn-96, Asn-134, Asn-140, Asn-171, Asn-207, Asn-213, Asn-242, Asn-246, and Asn-282. Ig-like C2-type domains lie at 106–192 (PKKM…VIVS) and 203–279 (TGPL…NSLG). A disulfide bridge links Cys-125 with Cys-174. An intrachain disulfide couples Cys-220 to Cys-272. A helical transmembrane segment spans residues 310–330 (FVYIFVFGGLIFIFMTTLFVF). The Cytoplasmic portion of the chain corresponds to 331–729 (YAIRKMKHEK…TDNLQKWCNY (399 aa)). One can recognise a Protein kinase domain in the interval 416-692 (LVLGATLGEG…EIVEYMDKLL (277 aa)). Residues 422-430 (LGEGAFGRV) and Lys-443 contribute to the ATP site. The Proton acceptor role is filled by Asp-556. Tyr-587 carries the phosphotyrosine; by autocatalysis modification.

This sequence belongs to the protein kinase superfamily. Tyr protein kinase family. Fibroblast growth factor receptor subfamily. As to expression, in early embryos, expression is specific to mesodermal primordium and invaginated mesodermal cells. At later stages, expression is seen in putative muscle precursor cells and in the CNS.

It localises to the membrane. It carries out the reaction L-tyrosyl-[protein] + ATP = O-phospho-L-tyrosyl-[protein] + ADP + H(+). May be required for patterning of muscle precursor cells. May be essential for generation of mesodermal and endodermal layers, invaginations of various types of cells and CNS formation. This is Fibroblast growth factor receptor homolog 1 (htl) from Drosophila melanogaster (Fruit fly).